The primary structure comprises 307 residues: MSAAPAQAHPPSRLTLYRQLIRWDRPAGWLLLLWPTLGALWLAAGGFPGWHLLAVFTLGTVLMRSAGCCINDVADREFDRHVKRTAERPVTRGAVSVKEALAVGAVLALAAFALVLTTNALTIALSFPALAVAVAYPYAKRCVAMPQAVLGVAFSFGIPMAFSAVRGGNGAWGLAALNAAVPWWAWGLLIGNLFWVLAYDTEYAMVDRDDDLKIGIKTSAITLGRHDVTAVMSFYQLYLLAWGAIGFWQGLGVAFAAGLAAAAVQVAWHHTLIRDRSRDGCFKAFRLNHWVGFAVFAGIVVDLGWRA.

The next 7 helical transmembrane spans lie at 27 to 47 (AGWL…AGGF), 50 to 70 (WHLL…GCCI), 101 to 121 (LAVG…TNAL), 142 to 162 (CVAM…PMAF), 179 to 199 (AAVP…VLAY), 239 to 259 (LLAW…AAGL), and 285 to 305 (FRLN…DLGW).

Belongs to the UbiA prenyltransferase family. Requires Mg(2+) as cofactor.

The protein resides in the cell inner membrane. It catalyses the reaction all-trans-octaprenyl diphosphate + 4-hydroxybenzoate = 4-hydroxy-3-(all-trans-octaprenyl)benzoate + diphosphate. Its pathway is cofactor biosynthesis; ubiquinone biosynthesis. Its function is as follows. Catalyzes the prenylation of para-hydroxybenzoate (PHB) with an all-trans polyprenyl group. Mediates the second step in the final reaction sequence of ubiquinone-8 (UQ-8) biosynthesis, which is the condensation of the polyisoprenoid side chain with PHB, generating the first membrane-bound Q intermediate 3-octaprenyl-4-hydroxybenzoate. The protein is 4-hydroxybenzoate octaprenyltransferase of Methylibium petroleiphilum (strain ATCC BAA-1232 / LMG 22953 / PM1).